A 324-amino-acid chain; its full sequence is 2-dehydro-3-deoxygluconokinase (324 aa).

Substrate-binding positions include 35–39 (GAESN), 106–108 (YYR), and R170. ATP-binding positions include 168-170 (NVR), 228-233 (KLGKEG), and 258-261 (GAGD). 2 residues coordinate substrate: D261 and D297. The active-site Proton acceptor is the D261.

It belongs to the carbohydrate kinase PfkB family.

It catalyses the reaction 2-dehydro-3-deoxy-D-gluconate + ATP = 2-dehydro-3-deoxy-6-phospho-D-gluconate + ADP + H(+). It participates in carbohydrate acid metabolism; 2-dehydro-3-deoxy-D-gluconate degradation; D-glyceraldehyde 3-phosphate and pyruvate from 2-dehydro-3-deoxy-D-gluconate: step 1/2. Catalyzes the phosphorylation of 2-keto-3-deoxygluconate (KDG) to produce 2-keto-3-deoxy-6-phosphogluconate (KDPG). This Bacillus subtilis (strain 168) protein is 2-dehydro-3-deoxygluconokinase (kdgK).